The primary structure comprises 628 residues: Ribosome assembly protein RSM22, mitochondrial (628 aa).

Residues 1 to 15 (MMKRCFSILPQNVRF) constitute a mitochondrion transit peptide. 4 residues coordinate [4Fe-4S] cluster: Cys373, Cys379, Cys400, and Cys513.

The protein belongs to the methyltransferase superfamily. Rsm22 family. As to quaternary structure, associates with the mitochondrial ribosome (mitoribosome). Only transiently interacts with the mitoribosome.

The protein resides in the mitochondrion. In terms of biological role, mitochondrial ribosome (mitoribosome) assembly factor. Binds at the interface of the head and body domains of the mitochondrial small ribosomal subunit (mt-SSU), occluding the mRNA channel and preventing compaction of the head domain towards the body. Probable inactive methyltransferase: retains the characteristic folding and ability to bind S-adenosyl-L-methionine, but it probably lost its methyltransferase activity. This is Ribosome assembly protein RSM22, mitochondrial (RSM22) from Saccharomyces cerevisiae (strain ATCC 204508 / S288c) (Baker's yeast).